We begin with the raw amino-acid sequence, 695 residues long: Lasso peptide isopeptidase AtxE2 (695 aa).

Residues 1-30 (MRSSKIRCPGAIRVGTLVTAFGCLPHVAFA) form the signal peptide. Intrachain disulfides connect C296–C301 and C354–C363. The active-site Nucleophile is S527. Cysteines 551 and 552 form a disulfide. Active-site charge relay system residues include E610 and H638.

The protein localises to the cytoplasm. Functionally, lasso peptide isopeptidase that specifically hydrolyzes Astexin-2 and Astexin-3, converting them to linear peptides. Has only a few specific contacts with substrates, because it recognizes Astexin knotted structure (principally the loop structure). Its binding to lasso peptides opens them to expose the isopeptide bonds for hydrolysis. The sequence is that of Lasso peptide isopeptidase AtxE2 from Asticcacaulis excentricus (strain ATCC 15261 / DSM 4724 / KCTC 12464 / NCIMB 9791 / VKM B-1370 / CB 48).